The primary structure comprises 198 residues: Recombination protein RecR (198 aa).

Residues 57–72 form a C4-type zinc finger; the sequence is CSICGNLTDDDPCHIC. The region spanning 80–175 is the Toprim domain; it reads TTILVVEDAK…KVTRLARGLA (96 aa).

The protein belongs to the RecR family.

Functionally, may play a role in DNA repair. It seems to be involved in an RecBC-independent recombinational process of DNA repair. It may act with RecF and RecO. This is Recombination protein RecR from Streptococcus pyogenes serotype M1.